The primary structure comprises 148 residues: Large ribosomal subunit protein bL9 (148 aa).

This sequence belongs to the bacterial ribosomal protein bL9 family.

Its function is as follows. Binds to the 23S rRNA. This chain is Large ribosomal subunit protein bL9, found in Bifidobacterium animalis subsp. lactis (strain AD011).